The following is a 426-amino-acid chain: Serine--tRNA ligase (426 aa).

Residues 36–66 (KRKHLQERTQDLQSQRNTISKEIGQKKAKGE) form a disordered region. Positions 46–55 (DLQSQRNTIS) are enriched in polar residues. Position 233–235 (233–235 (TAE)) interacts with L-serine. 264–266 (RSE) contributes to the ATP binding site. Residue glutamate 287 coordinates L-serine. Position 351–354 (351–354 (EISS)) interacts with ATP. Serine 387 contacts L-serine.

The protein belongs to the class-II aminoacyl-tRNA synthetase family. Type-1 seryl-tRNA synthetase subfamily. Homodimer. The tRNA molecule binds across the dimer.

Its subcellular location is the cytoplasm. The catalysed reaction is tRNA(Ser) + L-serine + ATP = L-seryl-tRNA(Ser) + AMP + diphosphate + H(+). It carries out the reaction tRNA(Sec) + L-serine + ATP = L-seryl-tRNA(Sec) + AMP + diphosphate + H(+). It participates in aminoacyl-tRNA biosynthesis; selenocysteinyl-tRNA(Sec) biosynthesis; L-seryl-tRNA(Sec) from L-serine and tRNA(Sec): step 1/1. Catalyzes the attachment of serine to tRNA(Ser). Is also able to aminoacylate tRNA(Sec) with serine, to form the misacylated tRNA L-seryl-tRNA(Sec), which will be further converted into selenocysteinyl-tRNA(Sec). The chain is Serine--tRNA ligase from Francisella tularensis subsp. tularensis (strain FSC 198).